The sequence spans 393 residues: NAD(P)H-quinone oxidoreductase subunit H, chloroplastic (393 aa).

Belongs to the complex I 49 kDa subunit family. NDH is composed of at least 16 different subunits, 5 of which are encoded in the nucleus.

The protein localises to the plastid. It is found in the chloroplast thylakoid membrane. It catalyses the reaction a plastoquinone + NADH + (n+1) H(+)(in) = a plastoquinol + NAD(+) + n H(+)(out). The enzyme catalyses a plastoquinone + NADPH + (n+1) H(+)(in) = a plastoquinol + NADP(+) + n H(+)(out). Functionally, NDH shuttles electrons from NAD(P)H:plastoquinone, via FMN and iron-sulfur (Fe-S) centers, to quinones in the photosynthetic chain and possibly in a chloroplast respiratory chain. The immediate electron acceptor for the enzyme in this species is believed to be plastoquinone. Couples the redox reaction to proton translocation, and thus conserves the redox energy in a proton gradient. The polypeptide is NAD(P)H-quinone oxidoreductase subunit H, chloroplastic (Oryza nivara (Indian wild rice)).